Reading from the N-terminus, the 365-residue chain is uncharacterized protein (365 aa).

Residue 29–36 (GPLNSGKS) participates in ATP binding.

This sequence belongs to the archaeal ATPase family.

This is an uncharacterized protein from Methanocaldococcus jannaschii (strain ATCC 43067 / DSM 2661 / JAL-1 / JCM 10045 / NBRC 100440) (Methanococcus jannaschii).